The chain runs to 692 residues: Elongation factor G (692 aa).

The tr-type G domain maps to 9–283 (DKLRNIGIMA…AVIDYLPSPL (275 aa)). GTP contacts are provided by residues 18-25 (AHIDAGKT), 82-86 (DTPGH), and 136-139 (NKMD).

It belongs to the TRAFAC class translation factor GTPase superfamily. Classic translation factor GTPase family. EF-G/EF-2 subfamily.

It localises to the cytoplasm. In terms of biological role, catalyzes the GTP-dependent ribosomal translocation step during translation elongation. During this step, the ribosome changes from the pre-translocational (PRE) to the post-translocational (POST) state as the newly formed A-site-bound peptidyl-tRNA and P-site-bound deacylated tRNA move to the P and E sites, respectively. Catalyzes the coordinated movement of the two tRNA molecules, the mRNA and conformational changes in the ribosome. This chain is Elongation factor G (fusA), found in Thermotoga maritima (strain ATCC 43589 / DSM 3109 / JCM 10099 / NBRC 100826 / MSB8).